We begin with the raw amino-acid sequence, 301 residues long: MAEIGIDQSKLPGVKEVCRDFAVLEDHTLAHNLQEQEIEHHLATNIQRNRLVQHDLQVAKQLQEEEDLKARAQIQKRQKDLERQDSEIAQEIQVKLVFEAEQRRRQEEKDEDIARLLQQKELQEEKKRKKHYPESQEHKVYEDSYYSENGGTKLRGTKQTVYDKPRREQELSDAEIARKLQEEELLANQADQMAAQVAQDEEIARLLMAEEKKAFKKGKEKEKSSFERKRNDQDWKHDASESPRSRSKEGPETQRHKGDKSSRSQPLLDDFEHARYYTSQPSPLRQFSKPEHSPKGSRRKQ.

Positions 57–131 (QVAKQLQEEE…LQEEKKRKKH (75 aa)) form a coiled coil. 3 stretches are compositionally biased toward basic and acidic residues: residues 123-142 (QEEKKRKKHYPESQEHKVYE), 161-175 (VYDKPRREQELSDAE), and 214-262 (AFKK…DKSS). Disordered regions lie at residues 123 to 175 (QEEK…SDAE) and 214 to 301 (AFKK…RRKQ).

In terms of processing, phosphorylated on tyrosine residues.

In terms of biological role, involved in EGFR signaling. The chain is Coiled-coil domain-containing protein 50 (CCDC50) from Gallus gallus (Chicken).